A 502-amino-acid polypeptide reads, in one-letter code: GTPase Obg (502 aa).

Residues 2–159 (NRFIDRVVLH…HDLILELKSM (158 aa)) enclose the Obg domain. Positions 160 to 341 (ADVGLVGFPS…LKYKLLEIVQ (182 aa)) constitute an OBG-type G domain. Residues 166-173 (GFPSAGKS), 191-195 (FTTLQ), 212-215 (DVPG), 292-295 (NKAD), and 322-324 (SAV) each bind GTP. Residues serine 173 and threonine 193 each contribute to the Mg(2+) site. One can recognise an OCT domain in the interval 364–444 (DGRRRREEFE…IGGVTFEWEP (81 aa)).

This sequence belongs to the TRAFAC class OBG-HflX-like GTPase superfamily. OBG GTPase family. In terms of assembly, monomer. Mg(2+) is required as a cofactor.

Its subcellular location is the cytoplasm. Its function is as follows. An essential GTPase which binds GTP, GDP and possibly (p)ppGpp with moderate affinity, with high nucleotide exchange rates and a fairly low GTP hydrolysis rate. Plays a role in control of the cell cycle, stress response, ribosome biogenesis and in those bacteria that undergo differentiation, in morphogenesis control. In Corynebacterium efficiens (strain DSM 44549 / YS-314 / AJ 12310 / JCM 11189 / NBRC 100395), this protein is GTPase Obg.